A 591-amino-acid chain; its full sequence is uncharacterized protein (591 aa).

4 helical membrane passes run 389–409 (VYLG…SALI), 411–431 (GGSP…GGIL), 538–558 (GILP…FALS), and 571–591 (PIIS…FNLL).

Its subcellular location is the membrane. This is an uncharacterized protein from Mycoplasma (Bacteriophage L2).